Reading from the N-terminus, the 284-residue chain is Elongation factor Ts (284 aa).

The interval 80–83 (TDFV) is involved in Mg(2+) ion dislocation from EF-Tu.

This sequence belongs to the EF-Ts family.

It localises to the cytoplasm. Associates with the EF-Tu.GDP complex and induces the exchange of GDP to GTP. It remains bound to the aminoacyl-tRNA.EF-Tu.GTP complex up to the GTP hydrolysis stage on the ribosome. The chain is Elongation factor Ts from Neisseria meningitidis serogroup C (strain 053442).